Consider the following 90-residue polypeptide: UPF0223 protein lmo1058 (90 aa).

The protein belongs to the UPF0223 family.

The protein is UPF0223 protein lmo1058 of Listeria monocytogenes serovar 1/2a (strain ATCC BAA-679 / EGD-e).